The sequence spans 340 residues: DNA-directed RNA polymerase subunit alpha (340 aa).

Residues 1 to 236 (MLSLSKNWNT…EQLQLFISFE (236 aa)) form an alpha N-terminal domain (alpha-NTD) region. Residues 251 to 340 (FSPYLLKRVD…LSKRYEDSYN (90 aa)) form an alpha C-terminal domain (alpha-CTD) region.

Belongs to the RNA polymerase alpha chain family. In terms of assembly, homodimer. The RNAP catalytic core consists of 2 alpha, 1 beta, 1 beta' and 1 omega subunit. When a sigma factor is associated with the core the holoenzyme is formed, which can initiate transcription.

It carries out the reaction RNA(n) + a ribonucleoside 5'-triphosphate = RNA(n+1) + diphosphate. Functionally, DNA-dependent RNA polymerase catalyzes the transcription of DNA into RNA using the four ribonucleoside triphosphates as substrates. The sequence is that of DNA-directed RNA polymerase subunit alpha from Rickettsia conorii (strain ATCC VR-613 / Malish 7).